We begin with the raw amino-acid sequence, 363 residues long: tRNA N6-adenosine threonylcarbamoyltransferase (363 aa).

Fe cation contacts are provided by H121 and H125. Substrate is bound by residues 143–147, D176, G189, and N287; that span reads LASGG. D315 lines the Fe cation pocket.

The protein belongs to the KAE1 / TsaD family. Fe(2+) serves as cofactor.

It is found in the cytoplasm. The enzyme catalyses L-threonylcarbamoyladenylate + adenosine(37) in tRNA = N(6)-L-threonylcarbamoyladenosine(37) in tRNA + AMP + H(+). Required for the formation of a threonylcarbamoyl group on adenosine at position 37 (t(6)A37) in tRNAs that read codons beginning with adenine. Is involved in the transfer of the threonylcarbamoyl moiety of threonylcarbamoyl-AMP (TC-AMP) to the N6 group of A37, together with TsaE and TsaB. TsaD likely plays a direct catalytic role in this reaction. This is tRNA N6-adenosine threonylcarbamoyltransferase from Rhodopseudomonas palustris (strain BisA53).